The primary structure comprises 416 residues: MKIYLVGGAVRDSLLNLPIKDKDYLVVGATPEQMLQLGYRQVGKDFPVFLHPKNQQEYALARTERKIGLGYGGFSCHASPDVTLEQDLLRRDLTINAIAQDEKGNLYDPFNGIEDINARLLRHVSDAFVEDPLRVLRVARFAARFHALGFHIAAETLALMRQISASDELNALTAERVWQEVDKSLGGPHPEVFFEVLHQCGALEVLFPEIFALFGVPQPEKWHPEIDTGVHTLMVLAQAALLTEDKSVRFAALVHDLGKALSPKEHLPKHHGHGQKGLPLIKALCTRLRVPNETRDLALLVSDQHQNVHQAFELRAETIVKIFDKADFWRKPERLTQLILACTADMRGRTGFENNLYPQGEYLTQCFLAANNVDIAAIIAAGFQGAEIKQALNLRRIEAVSQFKQKMQTKLPTDER.

The ATP site is built by G8 and R11. G8 and R11 together coordinate CTP. Residues D21 and D23 each contribute to the Mg(2+) site. ATP is bound by residues R91, R137, and R140. Residues R91, R137, and R140 each contribute to the CTP site. One can recognise an HD domain in the interval 228–329; the sequence is TGVHTLMVLA…VKIFDKADFW (102 aa).

It belongs to the tRNA nucleotidyltransferase/poly(A) polymerase family. Bacterial CCA-adding enzyme type 1 subfamily. In terms of assembly, monomer. Can also form homodimers and oligomers. The cofactor is Mg(2+). Ni(2+) serves as cofactor.

The enzyme catalyses a tRNA precursor + 2 CTP + ATP = a tRNA with a 3' CCA end + 3 diphosphate. The catalysed reaction is a tRNA with a 3' CCA end + 2 CTP + ATP = a tRNA with a 3' CCACCA end + 3 diphosphate. Its function is as follows. Catalyzes the addition and repair of the essential 3'-terminal CCA sequence in tRNAs without using a nucleic acid template. Adds these three nucleotides in the order of C, C, and A to the tRNA nucleotide-73, using CTP and ATP as substrates and producing inorganic pyrophosphate. tRNA 3'-terminal CCA addition is required both for tRNA processing and repair. Also involved in tRNA surveillance by mediating tandem CCA addition to generate a CCACCA at the 3' terminus of unstable tRNAs. While stable tRNAs receive only 3'-terminal CCA, unstable tRNAs are marked with CCACCA and rapidly degraded. This is Multifunctional CCA protein from Shewanella baltica (strain OS185).